Consider the following 516-residue polypeptide: Tyrosine decarboxylase 3 (516 aa).

Lysine 319 is subject to N6-(pyridoxal phosphate)lysine.

The protein belongs to the group II decarboxylase family. In terms of assembly, homodimer. It depends on pyridoxal 5'-phosphate as a cofactor.

It carries out the reaction L-tyrosine + H(+) = tyramine + CO2. The sequence is that of Tyrosine decarboxylase 3 (TYRDC-3) from Petroselinum crispum (Parsley).